The sequence spans 119 residues: Ribonuclease P protein component (119 aa).

It belongs to the RnpA family. In terms of assembly, consists of a catalytic RNA component (M1 or rnpB) and a protein subunit.

The catalysed reaction is Endonucleolytic cleavage of RNA, removing 5'-extranucleotides from tRNA precursor.. In terms of biological role, RNaseP catalyzes the removal of the 5'-leader sequence from pre-tRNA to produce the mature 5'-terminus. It can also cleave other RNA substrates such as 4.5S RNA. The protein component plays an auxiliary but essential role in vivo by binding to the 5'-leader sequence and broadening the substrate specificity of the ribozyme. The protein is Ribonuclease P protein component of Streptococcus pyogenes serotype M1.